The primary structure comprises 826 residues: MWALCSLLRSAAGRTMSQGRTISQAPARRERPRKDPLRHLRTREKRGPSGCSGGPNTVYLQVVAAGSRDSGAALYVFSEFNRYLFNCGEGIQRLMQEHKLKVARLDNIFLTRMHWSNVGGLSGMILTLKETGLPKCVLSGPPQLEKYLEAIKIFSGPLKGIELAVRPHSAPEYEDETMTVYQIPIHSEQRRGKHQPWQSPERPLSRLSPERSSDSESNENEPHLPHGVSQRRGVRDSSLVVAFICKLHLKRGNFLVLKAKEMGLPVGTAAIAPIIAAVKDGKSITHEGREILAEELCTPPDPGAAFVVVECPDESFIQPICENATFQRYQGKADAPVALVVHMAPESVLVDSRYQQWMERFGPDTQHLVLNENCASVHNLRSHKIQTQLNLIHPDIFPLLTSFPCKKEGPTLSVPMVQGECLLKYQLRPRREWQRDAIITCNPEEFIIEALQLPNFQQSVQEYRRSAQDGPAPAEKRSQYPEIIFLGTGSAIPMKIRNVSATLVNISPDTSLLLDCGEGTFGQLCRHYGDQVDRVLGTLAAVFVSHLHADHHTGLLNILLQRERALASLGKPFHPLLVVAPNQLKAWLQQYHNQCQEVLHHISMIPAKCLQEGAEISSPAVERLISSLLRTCDLEEFQTCLVRHCKHAFGCALVHTSGWKVVYSGDTMPCEALVRMGKDATLLIHEATLEDGLEEEAVEKTHSTTSQAISVGMRMNAEFIMLNHFSQRYAKVPLFSPNFNEKVGVAFDHMKVCFGDFATMPKLIPPLKALFAGDIEEMEERREKRELRQVRAALLSRELAGGLEDGEPQQKRAHTEEPQAKKVRAQ.

The transit peptide at 1-16 (MWALCSLLRSAAGRTM) directs the protein to the mitochondrion. Disordered stretches follow at residues 16 to 51 (MSQG…PSGC) and 188 to 231 (EQRR…VSQR). Residues 27–38 (ARRERPRKDPLR) are compositionally biased toward basic and acidic residues. S199, S208, S212, S229, S618, and S736 each carry phosphoserine. Basic and acidic residues predominate over residues 208–224 (SPERSSDSESNENEPHL). Positions 798-826 (ELAGGLEDGEPQQKRAHTEEPQAKKVRAQ) are disordered. A compositionally biased stretch (basic and acidic residues) spans 808–820 (PQQKRAHTEEPQA).

It belongs to the RNase Z family. Homodimer. Interacts with PTCD1. Requires Zn(2+) as cofactor.

The protein resides in the mitochondrion. Its subcellular location is the mitochondrion matrix. The protein localises to the mitochondrion nucleoid. It localises to the nucleus. The catalysed reaction is Endonucleolytic cleavage of RNA, removing extra 3' nucleotides from tRNA precursor, generating 3' termini of tRNAs. A 3'-hydroxy group is left at the tRNA terminus and a 5'-phosphoryl group is left at the trailer molecule.. Functionally, zinc phosphodiesterase, which displays mitochondrial tRNA 3'-processing endonuclease activity. Involved in tRNA maturation, by removing a 3'-trailer from precursor tRNA. Associates with mitochondrial DNA complexes at the nucleoids to initiate RNA processing and ribosome assembly. This chain is Zinc phosphodiesterase ELAC protein 2 (ELAC2), found in Pan troglodytes (Chimpanzee).